Reading from the N-terminus, the 74-residue chain is UPF0154 protein OB1676 (74 aa).

The chain crosses the membrane as a helical span at residues 4-24 (IWVVLIAIAALVAGVALGFFI).

The protein belongs to the UPF0154 family.

It localises to the membrane. The protein is UPF0154 protein OB1676 of Oceanobacillus iheyensis (strain DSM 14371 / CIP 107618 / JCM 11309 / KCTC 3954 / HTE831).